The following is a 488-amino-acid chain: 3-octaprenyl-4-hydroxybenzoate carboxy-lyase (488 aa).

N172 is a binding site for Mn(2+). Prenylated FMN contacts are provided by residues 175–177 (IYR), 189–191 (RWL), and 194–195 (RG). E238 contacts Mn(2+). D287 functions as the Proton donor in the catalytic mechanism.

It belongs to the UbiD family. As to quaternary structure, homohexamer. Prenylated FMN is required as a cofactor. Mn(2+) serves as cofactor.

It localises to the cell membrane. The catalysed reaction is a 4-hydroxy-3-(all-trans-polyprenyl)benzoate + H(+) = a 2-(all-trans-polyprenyl)phenol + CO2. Its pathway is cofactor biosynthesis; ubiquinone biosynthesis. Its function is as follows. Catalyzes the decarboxylation of 3-octaprenyl-4-hydroxy benzoate to 2-octaprenylphenol, an intermediate step in ubiquinone biosynthesis. This Alkalilimnicola ehrlichii (strain ATCC BAA-1101 / DSM 17681 / MLHE-1) protein is 3-octaprenyl-4-hydroxybenzoate carboxy-lyase.